The chain runs to 798 residues: Penicillin-binding protein 1A (798 aa).

Over 1-9 (MIKKIMTTC) the chain is Cytoplasmic. Residues 10–30 (FGLVFGLCVFAVGLLAIAILA) traverse the membrane as a helical; Signal-anchor for type II membrane protein segment. Residues 31-798 (TYPKLPSLDS…SKRQQLDSLF (768 aa)) are Periplasmic-facing. Positions 50–218 (LTVYSADGKI…SAYNPIVNPE (169 aa)) are transglycosylase. Glu88 functions as the Proton donor; for transglycosylase activity in the catalytic mechanism. The interval 378–700 (RRALGFAARA…GTIAVPVWVD (323 aa)) is transpeptidase. Ser461 (acyl-ester intermediate; for transpeptidase activity) is an active-site residue. The interval 739–798 (LMLDNGGAAPQPSRRVKEDDGGAAEGGRQEADDESRQDMQETPVLPSNTDSKRQQLDSLF) is disordered. Composition is skewed to basic and acidic residues over residues 765 to 777 (GRQE…RQDM) and 788 to 798 (DSKRQQLDSLF).

The protein in the N-terminal section; belongs to the glycosyltransferase 51 family. In the C-terminal section; belongs to the transpeptidase family.

It is found in the cell inner membrane. It catalyses the reaction [GlcNAc-(1-&gt;4)-Mur2Ac(oyl-L-Ala-gamma-D-Glu-L-Lys-D-Ala-D-Ala)](n)-di-trans,octa-cis-undecaprenyl diphosphate + beta-D-GlcNAc-(1-&gt;4)-Mur2Ac(oyl-L-Ala-gamma-D-Glu-L-Lys-D-Ala-D-Ala)-di-trans,octa-cis-undecaprenyl diphosphate = [GlcNAc-(1-&gt;4)-Mur2Ac(oyl-L-Ala-gamma-D-Glu-L-Lys-D-Ala-D-Ala)](n+1)-di-trans,octa-cis-undecaprenyl diphosphate + di-trans,octa-cis-undecaprenyl diphosphate + H(+). The catalysed reaction is Preferential cleavage: (Ac)2-L-Lys-D-Ala-|-D-Ala. Also transpeptidation of peptidyl-alanyl moieties that are N-acyl substituents of D-alanine.. It participates in cell wall biogenesis; peptidoglycan biosynthesis. Functionally, cell wall formation. Synthesis of cross-linked peptidoglycan from the lipid intermediates. The enzyme has a penicillin-insensitive transglycosylase N-terminal domain (formation of linear glycan strands) and a penicillin-sensitive transpeptidase C-terminal domain (cross-linking of the peptide subunits). This Neisseria lactamica protein is Penicillin-binding protein 1A (mrcA).